Consider the following 87-residue polypeptide: Small ribosomal subunit protein bS20 (87 aa).

Residues 1–11 (MANIKSAKKRA) are compositionally biased toward basic residues. The interval 1-27 (MANIKSAKKRAVQSEKRRQHNASQRSM) is disordered.

It belongs to the bacterial ribosomal protein bS20 family.

Its function is as follows. Binds directly to 16S ribosomal RNA. In Histophilus somni (strain 129Pt) (Haemophilus somnus), this protein is Small ribosomal subunit protein bS20.